A 66-amino-acid chain; its full sequence is UPF0391 membrane protein AM1_5042 (66 aa).

2 helical membrane passes run 4-24 (LTLTFLVVALIAAFLGFSGIA) and 28-47 (AAIAKILFCIFIVCFILVWP).

Belongs to the UPF0391 family.

The protein resides in the cell membrane. The protein is UPF0391 membrane protein AM1_5042 of Acaryochloris marina (strain MBIC 11017).